Reading from the N-terminus, the 108-residue chain is Large ribosomal subunit protein uL24 (108 aa).

It belongs to the universal ribosomal protein uL24 family. Part of the 50S ribosomal subunit.

In terms of biological role, one of two assembly initiator proteins, it binds directly to the 5'-end of the 23S rRNA, where it nucleates assembly of the 50S subunit. Functionally, one of the proteins that surrounds the polypeptide exit tunnel on the outside of the subunit. The protein is Large ribosomal subunit protein uL24 of Mycoplasmopsis synoviae (strain 53) (Mycoplasma synoviae).